The primary structure comprises 475 residues: ATP-dependent rRNA helicase RRP3 (475 aa).

A disordered region spans residues 30–59 (ALKQKKQAPVTEKPEEIVETTSEASQDVNS). The span at 48 to 59 (ETTSEASQDVNS) shows a compositional bias: polar residues. The Q motif signature appears at 64–92 (HTFSELNLVPELMEAIEKLKYTKPTPIQS). A Helicase ATP-binding domain is found at 95–266 (IPHALEGKDI…RASLHEPVKV (172 aa)). Residue 108 to 115 (AQTGSGKT) participates in ATP binding. Positions 214–217 (DEAD) match the DEAD box motif. The region spanning 293 to 437 (FLIHLLNEFM…KDPSPPRDVL (145 aa)) is the Helicase C-terminal domain. Residues 451 to 475 (AIKQTKDFHEKRTKKKRDDRDREER) form a disordered region.

This sequence belongs to the DEAD box helicase family. DDX47/RRP3 subfamily.

Its subcellular location is the nucleus. Functionally, required for pre-ribosomal RNA processing. Involved in the maturation of the 35S-pre-rRNA and to its cleavage to mature 18S rRNA. In Meyerozyma guilliermondii (strain ATCC 6260 / CBS 566 / DSM 6381 / JCM 1539 / NBRC 10279 / NRRL Y-324) (Yeast), this protein is ATP-dependent rRNA helicase RRP3 (RRP3).